The following is a 237-amino-acid chain: Ribonuclease PH (237 aa).

Residues Arg-86 and 124–126 (GTR) each bind phosphate.

It belongs to the RNase PH family. As to quaternary structure, homohexameric ring arranged as a trimer of dimers.

The catalysed reaction is tRNA(n+1) + phosphate = tRNA(n) + a ribonucleoside 5'-diphosphate. Phosphorolytic 3'-5' exoribonuclease that plays an important role in tRNA 3'-end maturation. Removes nucleotide residues following the 3'-CCA terminus of tRNAs; can also add nucleotides to the ends of RNA molecules by using nucleoside diphosphates as substrates, but this may not be physiologically important. Probably plays a role in initiation of 16S rRNA degradation (leading to ribosome degradation) during starvation. This Shewanella woodyi (strain ATCC 51908 / MS32) protein is Ribonuclease PH.